Consider the following 567-residue polypeptide: Berberine bridge enzyme-like D-1 (567 aa).

Residues 1–33 form the signal peptide; it reads MKRNISMFLQLLLIILMMISFLFTSLLVPSVSA. A disulfide bridge connects residues cysteine 42 and cysteine 103. A glycan (N-linked (GlcNAc...) asparagine) is linked at asparagine 50. An FAD-binding PCMH-type domain is found at 81 to 257; the sequence is SKPKPTVIIV…YAWKIRLLKV (177 aa). Histidine 118 carries the pros-8alpha-FAD histidine modification. 2 N-linked (GlcNAc...) asparagine glycosylation sites follow: asparagine 364 and asparagine 378.

This sequence belongs to the oxygen-dependent FAD-linked oxidoreductase family. FAD is required as a cofactor. In terms of tissue distribution, mostly expressed in roots at low levels.

The protein resides in the vacuole. It participates in alkaloid biosynthesis; nicotine biosynthesis. Functionally, involved in the biosynthesis of pyridine alkaloid natural products, leading mainly to the production of anabasine, anatabine, nicotine and nornicotine, effective deterrents against herbivores with antiparasitic and pesticide properties (neurotoxins); nornicotine serves as the precursor in the synthesis of the carcinogen compound N'-nitrosonornicotine (NNN). Catalyzes a late oxidation step subsequent to the pyridine ring condensation reaction in the biosynthesis of alkaloids. This Nicotiana tabacum (Common tobacco) protein is Berberine bridge enzyme-like D-1.